Here is a 345-residue protein sequence, read N- to C-terminus: N-acetyl-gamma-glutamyl-phosphate reductase (345 aa).

The active site involves C149.

This sequence belongs to the NAGSA dehydrogenase family. Type 1 subfamily.

It localises to the cytoplasm. The enzyme catalyses N-acetyl-L-glutamate 5-semialdehyde + phosphate + NADP(+) = N-acetyl-L-glutamyl 5-phosphate + NADPH + H(+). The protein operates within amino-acid biosynthesis; L-arginine biosynthesis; N(2)-acetyl-L-ornithine from L-glutamate: step 3/4. Catalyzes the NADPH-dependent reduction of N-acetyl-5-glutamyl phosphate to yield N-acetyl-L-glutamate 5-semialdehyde. The protein is N-acetyl-gamma-glutamyl-phosphate reductase of Herminiimonas arsenicoxydans.